The following is a 939-amino-acid chain: Trafficking kinesin-binding protein 1 (939 aa).

The 308-residue stretch at 46–353 folds into the HAP1 N-terminal domain; sequence LEEQLPHYKL…EELKNLRNKT (308 aa). The stretch at 106–354 forms a coiled coil; it reads KTYNDIDAVT…ELKNLRNKTM (249 aa). An interaction with HGS region spans residues 359-509; it reads RYHSLGLFPM…SLRRENYLSE (151 aa). Residue Ser444 is glycosylated (O-linked (GlcNAc) serine). The segment at 472–492 is disordered; the sequence is LGNEDHNKKPGTPGTPGSHDL. Residues 490 to 524 adopt a coiled-coil conformation; sequence HDLETALRRLSLRRENYLSERRFFEEEQERKLREL. Residue Ser534 is modified to Phosphoserine. Residues 655-669 are interaction with OGT; sequence PGKCMSQTNSTFTFT. O-linked (GlcNAc) serine glycosylation is found at Ser677 and Ser716. Residues Ser716 and Ser905 each carry the phosphoserine modification.

Belongs to the milton family. In terms of assembly, interacts with RHOT1 and RHOT2. Found in a complex with KIF5B, OGT, RHOT1 and RHOT2. Interacts with HGS. Interacts with GABRA1. Interacts with KIF5C. Interacts with OGT; stable interaction is not required for glycosylation of this protein by OGT. Isoform 1 interacts with OGT. Post-translationally, O-glycosylated. Glycosylated by OGT; glycosylation in response to increased extracellular glucose levels is required for and leads to regulation of mitochondrial motility by OGT. As to expression, widely expressed with the greatest expression in brain, liver and kidney. Detected throughout the CNS, including the cortex, hippocamps, thalamus and various subcortical nuclei of the forebrain and midbrain, the granule of Purkinje layers of the cerebellum and the gray matter of the spinal cord. High level detected in lower moter neurons (at protein level).

It localises to the cytoplasm. The protein localises to the nucleus. Its subcellular location is the mitochondrion. The protein resides in the early endosome. It is found in the endosome. It localises to the mitochondrion membrane. The protein localises to the cell cortex. In terms of biological role, involved in the regulation of endosome-to-lysosome trafficking, including endocytic trafficking of EGF-EGFR complexes and GABA-A receptors. Involved in mitochondrial motility. When O-glycosylated, abolishes mitochondrial motility. Crucial for recruiting OGT to the mitochondrial surface of neuronal processes. TRAK1 and RHOT form an essential protein complex that links KIF5 to mitochondria for light chain-independent, anterograde transport of mitochondria. The protein is Trafficking kinesin-binding protein 1 (Trak1) of Mus musculus (Mouse).